The primary structure comprises 583 residues: MSNKTTEATKTTKVKKVLSVVAGLGLLAGCSTLPDDTNPEAISSYAPAPSGQEAPTPTDGQPSDLLLRDFFTASAHPLRDHQAAKKFLTGGMQGRWQSDAPTMVLDRIDISSEGPGNDSKITYRVRGNIVGTLGVGGVFDPQYTAFETSYEMQNVDGQWRISNLPNVVVLDRQDFVSTYRARNIYFPDLNGRALVSDRRWIYTGQQSTAASLVSLLVAGPQDRLKKAVRNLVPEDATAQVSNDGGGDPAVHFTGLQELSADARRLLAAQVVWTLAGSEVRGPYELTADGTPMTDDMHGKWLVQDLSQYDPNVQVQTPLRAVSGGDVYQQDGARAKKLEGWLSQQYVESVALSPRDEVYAAVTGRGDAPRQLMIGAKGDQPVSSVQANSLTRPTWGLDATSAYVVADGERITEITRNPESGIVGERKVDSSTMAMVDGKDKRISVFRVSHDGARAVMIVNGRVYVVTLDTTDDGTKRLGAPVEIGHAVGDTAVSADWSDDGSVLVGTRANDAPVWDIEVDGSYSQQITGRNLSAPVVSVATDGSKIYVTDANALMQFDVTSEESRFWREVPTMQGKRATPVLAD.

Residues 1-29 form the signal peptide; the sequence is MSNKTTEATKTTKVKKVLSVVAGLGLLAG. Cys-30 carries the N-palmitoyl cysteine lipid modification. Cys-30 carries S-diacylglycerol cysteine lipidation. Residues 38-63 form a disordered region; it reads NPEAISSYAPAPSGQEAPTPTDGQPS.

It belongs to the LpqB lipoprotein family.

It is found in the cell membrane. This Corynebacterium jeikeium (strain K411) protein is Lipoprotein LpqB.